We begin with the raw amino-acid sequence, 434 residues long: Protein arginine N-methyltransferase 2 (434 aa).

The disordered stretch occupies residues 155–198 (IQGEETTEEERKEEEPSNTSDIIDEQKVEQPKEDLKEDPSSNQE). Residues 178 to 193 (DEQKVEQPKEDLKEDP) show a composition bias toward basic and acidic residues. Positions 193–434 (PSSNQETYLK…YHPEARFMDV (242 aa)) constitute an RMT2 domain. S-adenosyl-L-methionine is bound by residues Tyr-200, Met-230, 258 to 263 (FGMGII), 279 to 281 (EAH), 306 to 307 (WQ), and Asp-327.

It belongs to the class I-like SAM-binding methyltransferase superfamily. RMT2 methyltransferase family. Monomer.

The protein localises to the cytoplasm. The protein resides in the nucleus. Its function is as follows. S-adenosyl-L-methionine-dependent protein-arginine N-methyltransferase that methylates the delta-nitrogen atom of arginine residues to form N5-methylarginine (type IV) in target proteins. Monomethylates ribosomal protein L12. This chain is Protein arginine N-methyltransferase 2, found in Debaryomyces hansenii (strain ATCC 36239 / CBS 767 / BCRC 21394 / JCM 1990 / NBRC 0083 / IGC 2968) (Yeast).